A 386-amino-acid polypeptide reads, in one-letter code: 8-amino-7-oxononanoate synthase (386 aa).

Residue R20 coordinates substrate. Pyridoxal 5'-phosphate is bound at residue 107–108; that stretch reads GY. H132 provides a ligand contact to substrate. Positions 178, 206, and 234 each coordinate pyridoxal 5'-phosphate. K237 carries the N6-(pyridoxal phosphate)lysine modification. T351 serves as a coordination point for substrate.

Belongs to the class-II pyridoxal-phosphate-dependent aminotransferase family. BioF subfamily. Homodimer. The cofactor is pyridoxal 5'-phosphate.

The enzyme catalyses 6-carboxyhexanoyl-[ACP] + L-alanine + H(+) = (8S)-8-amino-7-oxononanoate + holo-[ACP] + CO2. It participates in cofactor biosynthesis; biotin biosynthesis. Its function is as follows. Catalyzes the decarboxylative condensation of pimeloyl-[acyl-carrier protein] and L-alanine to produce 8-amino-7-oxononanoate (AON), [acyl-carrier protein], and carbon dioxide. The sequence is that of 8-amino-7-oxononanoate synthase from Aromatoleum aromaticum (strain DSM 19018 / LMG 30748 / EbN1) (Azoarcus sp. (strain EbN1)).